The primary structure comprises 349 residues: 2-oxoglutarate and iron-dependent oxygenase domain-containing protein 2 (349 aa).

Positions 214–308 (DSHRAFVVKY…RWNLVVWLRA (95 aa)) constitute a Fe2OG dioxygenase domain. His-234, Asp-236, and His-289 together coordinate Fe cation. Arg-299 contacts 2-oxoglutarate.

Belongs to the OGFOD2 family. It depends on Fe(2+) as a cofactor. Requires L-ascorbate as cofactor.

The protein is 2-oxoglutarate and iron-dependent oxygenase domain-containing protein 2 (Ogfod2) of Mus musculus (Mouse).